The sequence spans 455 residues: Keratin, type I cuticular Ha5 (455 aa).

Residues 1–97 are head; sequence MASKCLKAGF…FGEGILTGNE (97 aa). The region spanning 97–408 is the IF rod domain; that stretch reads EKETMQSLND…GLLESEDSKL (312 aa). The segment at 98 to 132 is coil 1A; the sequence is KETMQSLNDRLAGYLEKVRQLEQENASLESRIREW. The tract at residues 133–143 is linker 1; sequence CEQQVPYMCPD. The interval 144–244 is coil 1B; the sequence is YQSYFRTIEE…HEEEVNSLRC (101 aa). The linker 12 stretch occupies residues 245 to 260; it reads QLGDRLNVEVDAAPPV. The tract at residues 261–404 is coil 2; that stretch reads DLNRVLEEMR…NTYRGLLESE (144 aa). The tail stretch occupies residues 405–455; the sequence is DSKLPCNPCAPDYSPSKSCLPCLPAASCGPSAARTNCSPRPICVPCPGGRF.

Belongs to the intermediate filament family. In terms of tissue distribution, early expression in the hair follicle, mainly found in supramatricial cells and lowermost cortical cells of the hair bulb.

This chain is Keratin, type I cuticular Ha5 (KRT35), found in Homo sapiens (Human).